The primary structure comprises 249 residues: Adapter protein MecA (249 aa).

It belongs to the MecA family. Homodimer.

Functionally, enables the recognition and targeting of unfolded and aggregated proteins to the ClpC protease or to other proteins involved in proteolysis. This Streptococcus thermophilus (strain ATCC BAA-491 / LMD-9) protein is Adapter protein MecA.